The following is a 176-amino-acid chain: Crossover junction endodeoxyribonuclease RuvC (176 aa).

Residues aspartate 7, glutamate 68, and aspartate 141 contribute to the active site. Positions 7, 68, and 141 each coordinate Mg(2+).

The protein belongs to the RuvC family. As to quaternary structure, homodimer which binds Holliday junction (HJ) DNA. The HJ becomes 2-fold symmetrical on binding to RuvC with unstacked arms; it has a different conformation from HJ DNA in complex with RuvA. In the full resolvosome a probable DNA-RuvA(4)-RuvB(12)-RuvC(2) complex forms which resolves the HJ. It depends on Mg(2+) as a cofactor.

It is found in the cytoplasm. The enzyme catalyses Endonucleolytic cleavage at a junction such as a reciprocal single-stranded crossover between two homologous DNA duplexes (Holliday junction).. Functionally, the RuvA-RuvB-RuvC complex processes Holliday junction (HJ) DNA during genetic recombination and DNA repair. Endonuclease that resolves HJ intermediates. Cleaves cruciform DNA by making single-stranded nicks across the HJ at symmetrical positions within the homologous arms, yielding a 5'-phosphate and a 3'-hydroxyl group; requires a central core of homology in the junction. The consensus cleavage sequence is 5'-(A/T)TT(C/G)-3'. Cleavage occurs on the 3'-side of the TT dinucleotide at the point of strand exchange. HJ branch migration catalyzed by RuvA-RuvB allows RuvC to scan DNA until it finds its consensus sequence, where it cleaves and resolves the cruciform DNA. The sequence is that of Crossover junction endodeoxyribonuclease RuvC from Streptomyces avermitilis (strain ATCC 31267 / DSM 46492 / JCM 5070 / NBRC 14893 / NCIMB 12804 / NRRL 8165 / MA-4680).